The sequence spans 773 residues: Disintegrin and metalloproteinase domain-containing protein 11 (773 aa).

Residues 1-24 form the signal peptide; that stretch reads MRRLRRWAIAALLLLPLLPPPGLG. Positions 25–229 are excised as a propeptide; the sequence is ALGPRGALHW…PNWPKLRRKR (205 aa). A disordered region spans residues 36–82; it reads SSAHVGSPESPEGSEVTEPSRLVRQSSGGEVRKPQLDTRVRQDPPRG. Basic and acidic residues predominate over residues 65 to 79; sequence EVRKPQLDTRVRQDP. N100 and N167 each carry an N-linked (GlcNAc...) asparagine glycan. Residues 230-738 are Extracellular-facing; that stretch reads QVRRGHPTVH…ERYKGPSGTN (509 aa). Positions 243 to 442 constitute a Peptidase M12B domain; sequence KYVELIVIND…GGGSCLFNKP (200 aa). The interval 336 to 773 is required for localization to cerebellar cortex basket cell terminals. Also required for localization of KCNA1, KCNA2, DLG4 and ADAM22 to cerebellar cortex basket cell terminal perisomatic axons and pinceaux; sequence GRTFQSTSSG…NIRRGRSGGA (438 aa). Disulfide bonds link C353/C437, C396/C421, C398/C405, and C507/C527. Positions 448 to 535 constitute a Disintegrin domain; it reads PPECGNGFVE…QCPPNLHKLD (88 aa). 2 N-linked (GlcNAc...) asparagine glycosylation sites follow: N609 and N677. 3 cysteine pairs are disulfide-bonded: C681/C696, C690/C702, and C704/C713. An EGF-like domain is found at 681–713; that stretch reads CPGSGERRICSHHGVCSNEGKCICQPDWTGKDC. Residues 739–759 form a helical membrane-spanning segment; it reads IIIGSIAGAVLVAAIVLGGTG. The Cytoplasmic segment spans residues 760 to 773; that stretch reads WGFKNIRRGRSGGA.

In terms of assembly, interacts with LGI1 and LGI4. Interacts with KCNA1/KV1.1, KCNA2/KV1.2, DLG4/PSD-95 and ADAM22. The precursor is cleaved by a furin endopeptidase. In terms of tissue distribution, abundantly expressed in cerebellar cortex basket cell terminals and pinceaux, weakly expressed in Purkinje cells (at protein level). Weakly expressed in the heart. Abundantly in expressed in neurons throughout the central nervous system including the telencephalon, diencephalic and brainstem nuclei, cerebellum and spinal cord. Expressed in the peripheral nervous system trigeminal and dorsal root ganglia. Expressed in the ganglion and bipolar cells of the retinae and weakly in the cornea of the eyes. Expressed in the hepatocytes of the parenchyma and hepatic lobules of the liver. Expressed in distinct focal areas in the juxtamedullary cortex of the kidney. Expressed in spermatocytes in the seminiferous tubules of the testes. Expressed in the stratum spinosum of the stratified squamous epithelia of the tongue and esophagus.

It is found in the presynaptic cell membrane. The protein resides in the perikaryon. It localises to the cell projection. Its subcellular location is the axon. Its function is as follows. Probable ligand for integrin in the brain. This is a non catalytic metalloprotease-like protein. Required for localization of the potassium channel subunit proteins KCNA1/KV1.1 and KCNA2/KV1.2 at cerebellar cortex basket cell distal terminals, is thereby involved in ephaptic inhibitory synchronization of Purkinje cell firing and response to stress. Plays a role in spatial learning and motor coordination. Involved in the nociceptive pain response to chemical-derived stimulation. The polypeptide is Disintegrin and metalloproteinase domain-containing protein 11 (Adam11) (Mus musculus (Mouse)).